The sequence spans 293 residues: Cell adhesion molecule CEACAM21 (293 aa).

A signal peptide spans 1–34; that stretch reads MGPPSACPHRECIPWQGLLLTASLLTFWNAPTTA. Residues 35–240 are Extracellular-facing; sequence WLFIASAPFE…TVKSDDNTLG (206 aa). Residue Asn111 is glycosylated (N-linked (GlcNAc...) asparagine). Residues 147–231 form the Ig-like C2-type domain; it reads PSIQASSTTV…SNRSDPLKLT (85 aa). A disulfide bond links Cys166 and Cys214. A helical membrane pass occupies residues 241 to 261; sequence ILIGVLVGSLLVAALVCFLLL. Residues 262 to 293 lie on the Cytoplasmic side of the membrane; sequence RKTGRASDQSDFREQQPPASTPGHGPSDSSIS. Positions 267-293 are disordered; the sequence is ASDQSDFREQQPPASTPGHGPSDSSIS.

This sequence belongs to the immunoglobulin superfamily. CEA family.

Its subcellular location is the membrane. This Homo sapiens (Human) protein is Cell adhesion molecule CEACAM21.